We begin with the raw amino-acid sequence, 334 residues long: Methylthioribose-1-phosphate isomerase (334 aa).

Substrate contacts are provided by residues 44–46 (RGA), R87, and Q192. D233 acts as the Proton donor in catalysis. 243–244 (NK) provides a ligand contact to substrate.

This sequence belongs to the eIF-2B alpha/beta/delta subunits family. MtnA subfamily.

It catalyses the reaction 5-(methylsulfanyl)-alpha-D-ribose 1-phosphate = 5-(methylsulfanyl)-D-ribulose 1-phosphate. It functions in the pathway amino-acid biosynthesis; L-methionine biosynthesis via salvage pathway; L-methionine from S-methyl-5-thio-alpha-D-ribose 1-phosphate: step 1/6. In terms of biological role, catalyzes the interconversion of methylthioribose-1-phosphate (MTR-1-P) into methylthioribulose-1-phosphate (MTRu-1-P). The polypeptide is Methylthioribose-1-phosphate isomerase (Dehalococcoides mccartyi (strain ATCC BAA-2266 / KCTC 15142 / 195) (Dehalococcoides ethenogenes (strain 195))).